Consider the following 181-residue polypeptide: Transmembrane protein 190 (181 aa).

Positions 1-21 are cleaved as a signal peptide; that stretch reads MVASGIPALSLFLLMQGSVDG. The Extracellular segment spans residues 22–81; it reads NGIQGFFYPWSCEGDVWDRESCGGQAAIENPNLCLRLRCCYRDGVCYHQRPDETMRRKHM. Residues 31–71 enclose the P-type domain; it reads WSCEGDVWDRESCGGQAAIENPNLCLRLRCCYRDGVCYHQR. Disulfide bonds link Cys-33-Cys-61, Cys-43-Cys-60, and Cys-55-Cys-67. Residues 82-102 traverse the membrane as a helical segment; sequence WALGWTCGGLLFLISSICLFW. Over 103–181 the chain is Cytoplasmic; sequence WAKRRDMLHL…EETEGGEDED (79 aa). The interval 135–181 is disordered; it reads TLSDKKTSAGSVPTSLPTEGNADVSGATEGEGTTEGGEETEGGEDED. Residues 142–152 show a composition bias toward polar residues; the sequence is SAGSVPTSLPT. The segment covering 170–181 has biased composition (acidic residues); that stretch reads GGEETEGGEDED.

It localises to the membrane. The protein is Transmembrane protein 190 (TMEM190) of Canis lupus familiaris (Dog).